The following is a 240-amino-acid chain: Nicotinamide riboside kinase (240 aa).

13–21 (GCSSSGKTT) provides a ligand contact to ATP. Positions 20 and 39 each coordinate Mg(2+). Asp39 (proton acceptor) is an active-site residue. Residues 39–42 (DDFY) and 59–60 (WD) each bind substrate. Residue Arg158 coordinates ATP. Residues Arg159 and 164-165 (GY) each bind substrate. ATP contacts are provided by residues 162 to 164 (RKG) and 208 to 210 (KSK).

The protein belongs to the uridine kinase family. NRK subfamily.

The catalysed reaction is beta-nicotinamide D-riboside + ATP = beta-nicotinamide D-ribonucleotide + ADP + H(+). The enzyme catalyses beta-D-ribosylnicotinate + ATP = nicotinate beta-D-ribonucleotide + ADP + H(+). It participates in cofactor biosynthesis; NAD(+) biosynthesis. Catalyzes the phosphorylation of nicotinamide riboside (NR) and nicotinic acid riboside (NaR) to form nicotinamide mononucleotide (NMN) and nicotinic acid mononucleotide (NaMN). In Saccharomyces cerevisiae (strain ATCC 204508 / S288c) (Baker's yeast), this protein is Nicotinamide riboside kinase (NRK1).